The sequence spans 445 residues: MTAGATLPTAASAALFERARAVTPGGVNSPVRAFNAVGGTPRFIRSARGAWLTDADGNEYVDLICSWGPMLLGHAHPEVQAAVSAAVARGTSYGAPTEPEVELAEEIAARAPVERVRFVSSGTEATMSAIRLARGFTGRDVVVKFAGCYHGHVDSLLASAGSGLATFAVPGTPGVPESSTALTLVLPYNDRAAVEKAFAEHGDRIACLITEAAPGNMGVVPPDADGSGGGFNGFLAETCARHGALFVSDEVMTGFRASRQGQWGLDGAVEGWRPDLMTFGKVMGGGFPAAAFGGRADVMSRLAPEGPVYQAGTLSGNPIATTAGLATLRLATDDVYAHIGAAADTIKTAASDALSRAGVEHVVQAAGTMFSVFLTAGPVRDFADASRTDVAAYAAFFHAMLDQGVYLPPSAYEAWFLSSAHDDRAVQTVLDALPTAARAAAAAQT.

K281 is modified (N6-(pyridoxal phosphate)lysine).

Belongs to the class-III pyridoxal-phosphate-dependent aminotransferase family. HemL subfamily. Homodimer. Requires pyridoxal 5'-phosphate as cofactor.

The protein resides in the cytoplasm. The enzyme catalyses (S)-4-amino-5-oxopentanoate = 5-aminolevulinate. Its pathway is porphyrin-containing compound metabolism; protoporphyrin-IX biosynthesis; 5-aminolevulinate from L-glutamyl-tRNA(Glu): step 2/2. This is Glutamate-1-semialdehyde 2,1-aminomutase from Nocardioides sp. (strain ATCC BAA-499 / JS614).